A 108-amino-acid chain; its full sequence is Tetrahydromethanopterin S-methyltransferase subunit B (108 aa).

The helical transmembrane segment at 79-99 threads the bilayer; it reads GMFFGFWVTMAILVLVTILAV.

It belongs to the MtrB family. In terms of assembly, the complex is composed of 8 subunits; MtrA, MtrB, MtrC, MtrD, MtrE, MtrF, MtrG and MtrH.

The protein resides in the cell membrane. The catalysed reaction is 5-methyl-5,6,7,8-tetrahydromethanopterin + coenzyme M + 2 Na(+)(in) = 5,6,7,8-tetrahydromethanopterin + methyl-coenzyme M + 2 Na(+)(out). The protein operates within one-carbon metabolism; methanogenesis from CO(2); methyl-coenzyme M from 5,10-methylene-5,6,7,8-tetrahydromethanopterin: step 2/2. Its function is as follows. Part of a complex that catalyzes the formation of methyl-coenzyme M and tetrahydromethanopterin from coenzyme M and methyl-tetrahydromethanopterin. This is an energy-conserving, sodium-ion translocating step. The protein is Tetrahydromethanopterin S-methyltransferase subunit B of Methanococcus maripaludis (strain C5 / ATCC BAA-1333).